A 220-amino-acid polypeptide reads, in one-letter code: MKKEYWLERWRQEEIGFHQREINPYLSRYWPELQVAPGKRVFVPLCGKSRDMIWLREQNLSVLGVELSPLAVEAFFKENGYSPRHIIGEKFDQWDADGIHLLCGDFFDLKKDHLAQVDAVYDRASLVALPPETRHAYTDHLLCILPPAIRILLITFDYPQAEMSGPPFAVSTAEVEALYGKRTDIRLLAKFDVLTENPRFQQRGISRLQESIFLLMTRTA.

S-adenosyl-L-methionine contacts are provided by Trp10, Leu45, Glu66, and Arg123.

The protein belongs to the class I-like SAM-binding methyltransferase superfamily. TPMT family.

It localises to the cytoplasm. The catalysed reaction is S-adenosyl-L-methionine + a thiopurine = S-adenosyl-L-homocysteine + a thiopurine S-methylether.. The polypeptide is Thiopurine S-methyltransferase (Nitrosospira multiformis (strain ATCC 25196 / NCIMB 11849 / C 71)).